The primary structure comprises 1213 residues: DNA-directed RNA polymerase subunit beta' (1213 aa).

Positions 60, 62, 75, and 78 each coordinate Zn(2+). The Mg(2+) site is built by aspartate 450, aspartate 452, and aspartate 454. Positions 819, 893, 900, and 903 each coordinate Zn(2+).

The protein belongs to the RNA polymerase beta' chain family. The RNAP catalytic core consists of 2 alpha, 1 beta, 1 beta' and 1 omega subunit. When a sigma factor is associated with the core the holoenzyme is formed, which can initiate transcription. The cofactor is Mg(2+). Zn(2+) serves as cofactor.

It catalyses the reaction RNA(n) + a ribonucleoside 5'-triphosphate = RNA(n+1) + diphosphate. Functionally, DNA-dependent RNA polymerase catalyzes the transcription of DNA into RNA using the four ribonucleoside triphosphates as substrates. The sequence is that of DNA-directed RNA polymerase subunit beta' from Streptococcus pyogenes serotype M2 (strain MGAS10270).